The primary structure comprises 111 residues: MSQSSSDNKCFMVVKFLELPFMDEKNLYYCVHSSWIVHRTQEYVMVAFPLQNELSPSLFDMKYRQVRIGIMEYKTGKCPYEKILYPKIILNNITHFILQYNYLYKKSYILK.

This is an uncharacterized protein from Microplitis demolitor bracovirus (isolate Webb) (MdBV).